Here is a 90-residue protein sequence, read N- to C-terminus: U7-theraphotoxin-Hhn1a 2 (90 aa).

Residues M1–S19 form the signal peptide. A propeptide spanning residues F20 to E50 is cleaved from the precursor. 3 disulfide bridges follow: C51–C65, C58–C70, and C64–C81.

It belongs to the neurotoxin 10 (Hwtx-1) family. 13 (Hntx-13) subfamily. Expressed by the venom gland.

The protein localises to the secreted. Functionally, ion channel inhibitor. In Cyriopagopus hainanus (Chinese bird spider), this protein is U7-theraphotoxin-Hhn1a 2.